A 626-amino-acid chain; its full sequence is DNA-directed RNA polymerase subunit gamma (626 aa).

Residues cysteine 71, cysteine 73, cysteine 86, and cysteine 89 each coordinate Zn(2+). Mg(2+) is bound by residues aspartate 467, aspartate 469, and aspartate 471.

Belongs to the RNA polymerase beta' chain family. RpoC1 subfamily. In terms of assembly, in cyanobacteria the RNAP catalytic core is composed of 2 alpha, 1 beta, 1 beta', 1 gamma and 1 omega subunit. When a sigma factor is associated with the core the holoenzyme is formed, which can initiate transcription. It depends on Mg(2+) as a cofactor. Zn(2+) is required as a cofactor.

The catalysed reaction is RNA(n) + a ribonucleoside 5'-triphosphate = RNA(n+1) + diphosphate. Its function is as follows. DNA-dependent RNA polymerase catalyzes the transcription of DNA into RNA using the four ribonucleoside triphosphates as substrates. This chain is DNA-directed RNA polymerase subunit gamma, found in Synechocystis sp. (strain ATCC 27184 / PCC 6803 / Kazusa).